Consider the following 78-residue polypeptide: Protein SlyX homolog (78 aa).

Belongs to the SlyX family.

The chain is Protein SlyX homolog from Xanthomonas oryzae pv. oryzae (strain MAFF 311018).